The sequence spans 609 residues: UvrABC system protein C (609 aa).

The GIY-YIG domain maps to 15-92 (TGSGVYQIQD…IKQFRPRYNV (78 aa)). The 36-residue stretch at 202 to 237 (DQVIIKLTERMEVASENLVFEEAAHYRDQIRQLRRL) folds into the UVR domain.

It belongs to the UvrC family. Interacts with UvrB in an incision complex.

It localises to the cytoplasm. The UvrABC repair system catalyzes the recognition and processing of DNA lesions. UvrC both incises the 5' and 3' sides of the lesion. The N-terminal half is responsible for the 3' incision and the C-terminal half is responsible for the 5' incision. The protein is UvrABC system protein C of Coxiella burnetii (strain Dugway 5J108-111).